Reading from the N-terminus, the 32-residue chain is ATP synthase 28 kDa subunit, mitochondrial (32 aa).

The protein resides in the mitochondrion. Its subcellular location is the mitochondrion inner membrane. Mitochondrial membrane ATP synthase (F(1)F(0) ATP synthase or Complex V) produces ATP from ADP in the presence of a proton gradient across the membrane which is generated by electron transport complexes of the respiratory chain. F-type ATPases consist of two structural domains, F(1) - containing the extramembraneous catalytic core and F(0) - containing the membrane proton channel, linked together by a central stalk and a peripheral stalk. During catalysis, ATP synthesis in the catalytic domain of F(1) is coupled via a rotary mechanism of the central stalk subunits to proton translocation. Part of the complex F(0) domain. In Spinacia oleracea (Spinach), this protein is ATP synthase 28 kDa subunit, mitochondrial.